The following is a 307-amino-acid chain: UDP-3-O-acyl-N-acetylglucosamine deacetylase (307 aa).

Zn(2+)-binding residues include histidine 78, histidine 241, and aspartate 245. Histidine 268 (proton donor) is an active-site residue.

Belongs to the LpxC family. Requires Zn(2+) as cofactor.

It carries out the reaction a UDP-3-O-[(3R)-3-hydroxyacyl]-N-acetyl-alpha-D-glucosamine + H2O = a UDP-3-O-[(3R)-3-hydroxyacyl]-alpha-D-glucosamine + acetate. It functions in the pathway glycolipid biosynthesis; lipid IV(A) biosynthesis; lipid IV(A) from (3R)-3-hydroxytetradecanoyl-[acyl-carrier-protein] and UDP-N-acetyl-alpha-D-glucosamine: step 2/6. Functionally, catalyzes the hydrolysis of UDP-3-O-myristoyl-N-acetylglucosamine to form UDP-3-O-myristoylglucosamine and acetate, the committed step in lipid A biosynthesis. The polypeptide is UDP-3-O-acyl-N-acetylglucosamine deacetylase (Polaromonas naphthalenivorans (strain CJ2)).